Here is a 676-residue protein sequence, read N- to C-terminus: MKFDSRVMLNSANNNSPQHPVSAPSDINMNGYNRKLPQKRGYEMPKYSDPKKKMCKERIPQPKNTVAMLNELRHGLIYKLESQTGPVHAPLFTISVEVDGQKYLGQGRSKKVARIEAAATALRSFIQFKDGAVLSPLKPAGNLDFTSDEHLENGIENLSSSKMFEIIQTMLTEKLSNPTSLEQPTFCMSQNVSKSAITVDGQKKVPDKGPVMLLYELFNDVNFECINIDGAQNNCRFKMTVTINEKKFDGTGPSKKTAKNAAAKAALASLCNISYSPMVVPQKNVPLPIDDKSSSMELPQIHADTIGRLVLEKFMEVIKGQEAYSRRKVLAGIVMTENMNFCEAKVISVSTGTKCVSGEHMSVNGAVLNDSHAEIVSRRCLLKYLYAQLDLQCNQATAYQSIFVRNTDGQYPYKLKSGVHFHLYINTAPCGDARIFSPHENDTGVDKHPNRKARGQLRTKIESGEGTIPVKSSDGIQTWDGVLQGQRLLTMSCSDKIARWNIVGIQGSLLSSIIEPVYLHSIVLGSLLHPEHMYRAVCGRIEKSIQGLPPPYHLNKPRLALVTSAEPRNQAKAPNFGINWTIGDTELEVVNSLTGRTIGGQVSRITKQAFFVKYGFLMANLPGILVRKVTTDYGQTKANVKDYQIAKLELFSAFKREDLGSWLKKPIEQDEFGLAE.

A disordered region spans residues Met1 to Lys51. Residues Met8–Gly31 show a composition bias toward polar residues. The segment covering Arg40–Lys51 has biased composition (basic and acidic residues). DRBM domains are found at residues Gln61 to Gln127 and Ile197 to Asn272. Positions Ser348–Phe672 constitute an A to I editase domain. A Zn(2+)-binding site is contributed by His372. Glu374 serves as the catalytic Proton donor. Residues Cys430 and Cys493 each contribute to the Zn(2+) site.

As to expression, expressed in embryonic nervous system; late stage 13 sees ventral nerve cord expression which spreads to brain by stage 16. Expression is maintained through to adulthood.

In terms of biological role, has A-to-I RNA editing activity on extended dsRNA: edits RNA-binding protein Rnp4F. A-to-I editing of pre-mRNAs acts predominantly through nervous system targets to affect adult nervous system integrity, function and behavior. Essential for adaptation to environmental stresses, such as oxygen deprivation, and for the prevention of premature neuronal degeneration, through the editing of ion channels as targets. The protein is Double-stranded RNA-specific editase Adar of Drosophila melanogaster (Fruit fly).